The following is a 467-amino-acid chain: ATP synthase subunit beta (467 aa).

156-163 (GGAGVGKT) is an ATP binding site.

It belongs to the ATPase alpha/beta chains family. In terms of assembly, F-type ATPases have 2 components, CF(1) - the catalytic core - and CF(0) - the membrane proton channel. CF(1) has five subunits: alpha(3), beta(3), gamma(1), delta(1), epsilon(1). CF(0) has three main subunits: a(1), b(2) and c(9-12). The alpha and beta chains form an alternating ring which encloses part of the gamma chain. CF(1) is attached to CF(0) by a central stalk formed by the gamma and epsilon chains, while a peripheral stalk is formed by the delta and b chains.

The protein localises to the cell inner membrane. The catalysed reaction is ATP + H2O + 4 H(+)(in) = ADP + phosphate + 5 H(+)(out). In terms of biological role, produces ATP from ADP in the presence of a proton gradient across the membrane. The catalytic sites are hosted primarily by the beta subunits. This chain is ATP synthase subunit beta, found in Cupriavidus taiwanensis (strain DSM 17343 / BCRC 17206 / CCUG 44338 / CIP 107171 / LMG 19424 / R1) (Ralstonia taiwanensis (strain LMG 19424)).